Here is a 179-residue protein sequence, read N- to C-terminus: ATP synthase subunit delta (179 aa).

This sequence belongs to the ATPase delta chain family. In terms of assembly, F-type ATPases have 2 components, F(1) - the catalytic core - and F(0) - the membrane proton channel. F(1) has five subunits: alpha(3), beta(3), gamma(1), delta(1), epsilon(1). F(0) has three main subunits: a(1), b(2) and c(10-14). The alpha and beta chains form an alternating ring which encloses part of the gamma chain. F(1) is attached to F(0) by a central stalk formed by the gamma and epsilon chains, while a peripheral stalk is formed by the delta and b chains.

It localises to the cell membrane. F(1)F(0) ATP synthase produces ATP from ADP in the presence of a proton or sodium gradient. F-type ATPases consist of two structural domains, F(1) containing the extramembraneous catalytic core and F(0) containing the membrane proton channel, linked together by a central stalk and a peripheral stalk. During catalysis, ATP synthesis in the catalytic domain of F(1) is coupled via a rotary mechanism of the central stalk subunits to proton translocation. Its function is as follows. This protein is part of the stalk that links CF(0) to CF(1). It either transmits conformational changes from CF(0) to CF(1) or is implicated in proton conduction. This is ATP synthase subunit delta from Clostridium botulinum (strain Alaska E43 / Type E3).